The following is a 131-amino-acid chain: Profilin-2 (131 aa).

Cys-13 and Cys-115 are joined by a disulfide. Residues Ala-81 to Thr-97 carry the Involved in PIP2 interaction motif. A Phosphothreonine modification is found at Thr-111.

The protein belongs to the profilin family. In terms of assembly, occurs in many kinds of cells as a complex with monomeric actin in a 1:1 ratio. Phosphorylated by MAP kinases.

The protein localises to the cytoplasm. Its subcellular location is the cytoskeleton. Functionally, binds to actin and affects the structure of the cytoskeleton. At high concentrations, profilin prevents the polymerization of actin, whereas it enhances it at low concentrations. By binding to PIP2, it inhibits the formation of IP3 and DG. The sequence is that of Profilin-2 (PRO2) from Phleum pratense (Common timothy).